Consider the following 493-residue polypeptide: MSDLARTDVVLIGAGIMSATLGVLLRRLEPNWSITLIERLDAVAAESSGPWNNAGTGHSALCEMNYTPEMPDGSIDITKAVRVNEQFQVTRQFWAYAAENGILTDVRSFLNPVPHVSFVHGSRGVEYLRRRQKALAGNPLFAGTEFIESPDEFARRLPFMAAKRAFSEPVALNWAADGTDVDFGALAKQLIGYCVQNGTTALFGHEVRNLSRQSDGSWTVTMCNRRTGEKRKLNTKFVFVGAGGDTLPVLQKSGIKEVKGFAGFPIGGRFLRAGNPALTASHRAKVYGFPAPGAPPLGALHLDLRFVNGKSWLVFGPYAGWSPKFLKHGQISDLPRSIRPDNLLSVLGVGLTERRLLNYLISQLRLSEPERVSALREFAPSAIDSDWELTIAGQRVQVIRRDERNGGVLEFGTTVIGDADGSIAGLLGGSPGASTAVAIMLDVLQKCFANRYQSWLPTLKEMVPSLGVQLSNEPALFDEVWSWSTKALKLGAA.

Belongs to the MQO family. FAD is required as a cofactor.

The enzyme catalyses (S)-malate + a quinone = a quinol + oxaloacetate. Its pathway is carbohydrate metabolism; tricarboxylic acid cycle; oxaloacetate from (S)-malate (quinone route): step 1/1. This is Probable malate:quinone oxidoreductase from Mycobacterium tuberculosis (strain ATCC 25177 / H37Ra).